The following is a 607-amino-acid chain: MSQVFDASAFLATCSGRPGVYRMFDGEARLLYVGKAKNLKKRLASYFRKAGLAPKTAALVARIAQVETTITANETEALLLEQNLIKEWRPPYNILLRDDKSYPYVFLSDGEFPRLGIHRGAKKAKGRYFGPYPSAGAIRESLSLLQKAFSVRQCEDSYYANRTRPCLQYQIKRCKGPCTDLVTAEEYAEDVRHSVMFLEGRSQQLGNELNAEMEKAAMALDFEKAAELRDQIALLRRVQDQQYIEGGSGDVDVIAAFVNPGGACVHLISVRGGRVLGSKNFFPQVGIEEEVAEVMAAFLSQYYLGNAERELPGELIVNVVHEDFNAITEALHTLRGRELTISHRVRGTRARWQQLAVTNAEQALNARLANRQHMAARFEALAEVLGLDEVPQRLECYDISHSSGEATVASCVVFGPEGPIKSDYRRFNIEGVTAGDDYAAMHQALTRRYGRIKDGEGKLPDVLLVDGGKGQLNMARDVMQALGFTDLTLLGVAKGVTRKAGFETLYLNDVHHEFTLKGDSSALHLIQQIRDEAHRFAITGHRARRGKARRVSSLEDVAGVGPKRRRDLLKHFGGLQELNRASIDEIAKAPGISKKLAESIYASLHSE.

Positions 16-94 constitute a GIY-YIG domain; it reads GRPGVYRMFD…IKEWRPPYNI (79 aa). Positions 203–238 constitute a UVR domain; that stretch reads QQLGNELNAEMEKAAMALDFEKAAELRDQIALLRRV.

Belongs to the UvrC family. In terms of assembly, interacts with UvrB in an incision complex.

It localises to the cytoplasm. Its function is as follows. The UvrABC repair system catalyzes the recognition and processing of DNA lesions. UvrC both incises the 5' and 3' sides of the lesion. The N-terminal half is responsible for the 3' incision and the C-terminal half is responsible for the 5' incision. The protein is UvrABC system protein C of Pseudomonas putida (strain ATCC 700007 / DSM 6899 / JCM 31910 / BCRC 17059 / LMG 24140 / F1).